The chain runs to 250 residues: UPF0246 protein cce_3295 (250 aa).

It belongs to the UPF0246 family.

This chain is UPF0246 protein cce_3295, found in Crocosphaera subtropica (strain ATCC 51142 / BH68) (Cyanothece sp. (strain ATCC 51142)).